Consider the following 417-residue polypeptide: Leucine-rich repeat-containing protein 42 (417 aa).

LRR repeat units follow at residues 167–188, 195–215, 227–248, and 252–273; these read CLHS…LAHL, SLTE…QKMT, KLKV…CFLF, and LLKF…LKKI. The interval 360 to 390 is disordered; the sequence is FFRPKEQKDPDSSNSEKRRHSTKRTGADCVQ. Over residues 362 to 375 the composition is skewed to basic and acidic residues; that stretch reads RPKEQKDPDSSNSE.

The protein belongs to the LRRC42 family.

The protein is Leucine-rich repeat-containing protein 42 (lrrc42) of Xenopus laevis (African clawed frog).